The following is an 81-amino-acid chain: MCSVHYNHSLAAMSGSDIMAYSLSLEQKTAFAFVGMLLVFLGLLIVRCFRILLDPYSSMPSSSWGDGLEGLEKGTFEYALT.

Residues 29–49 (TAFAFVGMLLVFLGLLIVRCF) traverse the membrane as a helical segment.

The protein belongs to the cortexin family.

Its subcellular location is the membrane. The chain is Cortexin-2 (ctxn2) from Danio rerio (Zebrafish).